A 140-amino-acid chain; its full sequence is uncharacterized protein (140 aa).

The next 2 helical transmembrane spans lie at 33 to 53 (LLYV…KYYF) and 59 to 79 (SLLF…FMGF). Residues 89 to 104 (EAEPDYRKKQESKNQD) show a composition bias toward basic and acidic residues. Residues 89 to 140 (EAEPDYRKKQESKNQDFLKSQSNEPLEYASSSAVELEKEKNTREGLTILESS) form a disordered region. Polar residues predominate over residues 105–121 (FLKSQSNEPLEYASSSA).

It is found in the membrane. This is an uncharacterized protein from Schizosaccharomyces pombe (strain 972 / ATCC 24843) (Fission yeast).